We begin with the raw amino-acid sequence, 331 residues long: MDPRSEVLLRQAELFEGELLLAGLPADDLLGLLPQAHGWSWHAGDQAQLAARFAGRSRFDTQMPEGDYRAAVLFLPKSRELTDYLLQALASRLTGRPLYLVGEKRGGIERAAKQLAVYGKPRKLDSARHCQLWSVQIEQAPATPDLDALAQVYSLQLADGPLQVVSLPGVFAHGRLDRGSALLLEHLDSLPQGHLLDFGCGAGVIGAALKRRYPSSRVSLLDVDAFALASSRLTLARNGLEAELIAGTGIESAPGELAAIVSNPPFHQGVHTHYQASENLLTQAARHLRDGGELRLVANSFLKYPPLIERHLGPCRTLAEAEGFRIYSARR.

The protein belongs to the methyltransferase superfamily. RsmC family. Monomer.

It is found in the cytoplasm. The enzyme catalyses guanosine(1207) in 16S rRNA + S-adenosyl-L-methionine = N(2)-methylguanosine(1207) in 16S rRNA + S-adenosyl-L-homocysteine + H(+). Its function is as follows. Specifically methylates the guanine in position 1207 of 16S rRNA in the 30S particle. The chain is Ribosomal RNA small subunit methyltransferase C from Ectopseudomonas mendocina (strain ymp) (Pseudomonas mendocina).